The sequence spans 163 residues: 6,7-dimethyl-8-ribityllumazine synthase 1 (163 aa).

Residues F27, 58-60, and 87-89 each bind 5-amino-6-(D-ribitylamino)uracil; these read ALE and CVV. 92–93 contacts (2S)-2-hydroxy-3-oxobutyl phosphate; it reads ET. H95 acts as the Proton donor in catalysis. A 5-amino-6-(D-ribitylamino)uracil-binding site is contributed by N120. R134 is a (2S)-2-hydroxy-3-oxobutyl phosphate binding site.

Belongs to the DMRL synthase family.

It carries out the reaction (2S)-2-hydroxy-3-oxobutyl phosphate + 5-amino-6-(D-ribitylamino)uracil = 6,7-dimethyl-8-(1-D-ribityl)lumazine + phosphate + 2 H2O + H(+). The protein operates within cofactor biosynthesis; riboflavin biosynthesis; riboflavin from 2-hydroxy-3-oxobutyl phosphate and 5-amino-6-(D-ribitylamino)uracil: step 1/2. Catalyzes the formation of 6,7-dimethyl-8-ribityllumazine by condensation of 5-amino-6-(D-ribitylamino)uracil with 3,4-dihydroxy-2-butanone 4-phosphate. This is the penultimate step in the biosynthesis of riboflavin. This chain is 6,7-dimethyl-8-ribityllumazine synthase 1, found in Rhodopseudomonas palustris (strain ATCC BAA-98 / CGA009).